The chain runs to 198 residues: Recombination protein RecR (198 aa).

The segment at 57–72 (CSVCGNLTDDDPCLIC) adopts a C4-type zinc-finger fold. Positions 80-175 (SVILVVEDSK…KVTRLARGLA (96 aa)) constitute a Toprim domain.

It belongs to the RecR family.

Its function is as follows. May play a role in DNA repair. It seems to be involved in an RecBC-independent recombinational process of DNA repair. It may act with RecF and RecO. This is Recombination protein RecR from Streptococcus agalactiae serotype Ia (strain ATCC 27591 / A909 / CDC SS700).